A 255-amino-acid chain; its full sequence is Electron transfer flavoprotein beta subunit lysine methyltransferase (255 aa).

A mitochondrion-targeting transit peptide spans Met-1–Val-32.

This sequence belongs to the methyltransferase superfamily. ETFBKMT family. Interacts with HSPD1; this protein may possibly be a methylation substrate.

Its subcellular location is the cytoplasm. It localises to the mitochondrion matrix. The catalysed reaction is L-lysyl-[protein] + 3 S-adenosyl-L-methionine = N(6),N(6),N(6)-trimethyl-L-lysyl-[protein] + 3 S-adenosyl-L-homocysteine + 3 H(+). Functionally, protein-lysine methyltransferase that selectively trimethylates the flavoprotein ETFB in mitochondria. Thereby, may negatively regulate the function of ETFB in electron transfer from Acyl-CoA dehydrogenases to the main respiratory chain. This is Electron transfer flavoprotein beta subunit lysine methyltransferase from Rattus norvegicus (Rat).